Reading from the N-terminus, the 130-residue chain is Holo-[acyl-carrier-protein] synthase (130 aa).

Residues Asp9 and Glu58 each contribute to the Mg(2+) site.

The protein belongs to the P-Pant transferase superfamily. AcpS family. It depends on Mg(2+) as a cofactor.

It localises to the cytoplasm. The enzyme catalyses apo-[ACP] + CoA = holo-[ACP] + adenosine 3',5'-bisphosphate + H(+). In terms of biological role, transfers the 4'-phosphopantetheine moiety from coenzyme A to a Ser of acyl-carrier-protein. This is Holo-[acyl-carrier-protein] synthase from Mycobacterium leprae (strain Br4923).